Consider the following 373-residue polypeptide: SH3 domain-binding protein 5-like (373 aa).

Residues 1–36 form a disordered region; the sequence is MEGKEGPPCEVRLPTPGAEREGPVHPELGAFGESAS. Coiled coils occupy residues 35–98 and 170–258; these read ASDA…ESAR and WQEM…KLRY. Disordered stretches follow at residues 274–308 and 332–373; these read ARRT…PADT and DLTD…SVSL. The segment covering 332 to 360 has biased composition (basic and acidic residues); it reads DLTDVTSLDGRETGAVESGGSRERGEDRG.

It belongs to the SH3BP5 family.

In terms of biological role, functions as a guanine nucleotide exchange factor (GEF) for rab11a. The chain is SH3 domain-binding protein 5-like (sh3bp5l) from Xenopus laevis (African clawed frog).